Here is a 160-residue protein sequence, read N- to C-terminus: Seed allergenic protein RA5 (160 aa).

The N-terminal stretch at 1–26 (MASNKVVFSVLLLAVVSVLAATATMA) is a signal peptide. Intrachain disulfides connect Cys-42/Cys-92, Cys-56/Cys-80, Cys-64/Cys-124, Cys-81/Cys-140, and Cys-94/Cys-152.

It belongs to the protease inhibitor I6 (cereal trypsin/alpha-amylase inhibitor) family. Five disulfide bonds are present.

The protein localises to the secreted. Functionally, seed storage protein. The chain is Seed allergenic protein RA5 (RA5) from Oryza sativa subsp. japonica (Rice).